The following is a 361-amino-acid chain: Spermidine/putrescine import ATP-binding protein PotA (361 aa).

Residues 4–234 (LEIKNVVKRF…PKNRFVADFL (231 aa)) form the ABC transporter domain. Position 36–43 (36–43 (GPSGCGKT)) interacts with ATP.

The protein belongs to the ABC transporter superfamily. Spermidine/putrescine importer (TC 3.A.1.11.1) family. In terms of assembly, the complex is composed of two ATP-binding proteins (PotA), two transmembrane proteins (PotB and PotC) and a solute-binding protein (PotD).

Its subcellular location is the cell inner membrane. The enzyme catalyses ATP + H2O + polyamine-[polyamine-binding protein]Side 1 = ADP + phosphate + polyamineSide 2 + [polyamine-binding protein]Side 1.. Functionally, part of the ABC transporter complex PotABCD involved in spermidine/putrescine import. Responsible for energy coupling to the transport system. The sequence is that of Spermidine/putrescine import ATP-binding protein PotA from Chromobacterium violaceum (strain ATCC 12472 / DSM 30191 / JCM 1249 / CCUG 213 / NBRC 12614 / NCIMB 9131 / NCTC 9757 / MK).